Consider the following 631-residue polypeptide: Quinoprotein alcohol dehydrogenase PedE (631 aa).

The N-terminal stretch at 1 to 33 (MTIRSLPALSPLALSVRVLLMAGSLALGNVATA) is a signal peptide. Ca(2+)-binding residues include Asp53, Thr56, and Asp59. Glu103 contributes to the pyrroloquinoline quinone binding site. Cys147 and Cys148 are oxidised to a cystine. Residues Arg153, Thr197, and 215-217 (HGS) each bind pyrroloquinoline quinone. Glu221 contributes to the Ca(2+) binding site. The tract at residues 250–286 (GRLNGKDSTPTGDVKAPSWPDDPTTETGKVEAWSHGG) is disordered. Positions 308 and 358 each coordinate Ca(2+). Asp358 serves as the catalytic Proton acceptor. Pyrroloquinoline quinone is bound at residue Arg386. The disordered stretch occupies residues 421 to 443 (GRPVENPGQRPAKPLPGETKGKP). Pyrroloquinoline quinone-binding residues include Trp531 and Ala595.

Belongs to the bacterial PQQ dehydrogenase family. In terms of assembly, homodimer. Interacts with cytochrome c550. Requires pyrroloquinoline quinone as cofactor. Ca(2+) serves as cofactor. Post-translationally, the disulfide ring formed between the two adjacent cysteine residues Cys-147 and Cys-148 is essential for efficient electron transfer at pH 7 from PedE to its natural electron acceptor cytochrome c550.

The protein resides in the periplasm. It carries out the reaction a primary alcohol + 2 Fe(III)-[cytochrome c] = an aldehyde + 2 Fe(II)-[cytochrome c] + 2 H(+). The catalysed reaction is ethanol + 2 Fe(III)-[cytochrome c] = acetaldehyde + 2 Fe(II)-[cytochrome c] + 2 H(+). The enzyme catalyses butan-1-ol + 2 Fe(III)-[cytochrome c] = butanal + 2 Fe(II)-[cytochrome c] + 2 H(+). It catalyses the reaction butan-2-ol + 2 Fe(III)-[cytochrome c] = butan-2-one + 2 Fe(II)-[cytochrome c] + 2 H(+). It carries out the reaction 2-phenylethanol + 2 Fe(III)-[cytochrome c] = 2-phenylacetaldehyde + 2 Fe(II)-[cytochrome c] + 2 H(+). The catalysed reaction is octan-1-ol + 2 Fe(III)-[cytochrome c] = octanal + 2 Fe(II)-[cytochrome c] + 2 H(+). The enzyme catalyses hexan-1-ol + 2 Fe(III)-[cytochrome c] = hexanal + 2 Fe(II)-[cytochrome c] + 2 H(+). It catalyses the reaction cinnamyl alcohol + 2 Fe(III)-[cytochrome c] = cinnamaldehyde + 2 Fe(II)-[cytochrome c] + 2 H(+). It carries out the reaction farnesol + 2 Fe(III)-[cytochrome c] = farnesal + 2 Fe(II)-[cytochrome c] + 2 H(+). The catalysed reaction is an aldehyde + 2 Fe(III)-[cytochrome c] + H2O = a carboxylate + 2 Fe(II)-[cytochrome c] + 3 H(+). The enzyme catalyses acetaldehyde + 2 Fe(III)-[cytochrome c] + H2O = 2 Fe(II)-[cytochrome c] + acetate + 3 H(+). It catalyses the reaction butanal + 2 Fe(III)-[cytochrome c] + H2O = butanoate + 2 Fe(II)-[cytochrome c] + 3 H(+). It carries out the reaction hexanal + 2 Fe(III)-[cytochrome c] + H2O = hexanoate + 2 Fe(II)-[cytochrome c] + 3 H(+). The catalysed reaction is octanal + 2 Fe(III)-[cytochrome c] + H2O = octanoate + 2 Fe(II)-[cytochrome c] + 3 H(+). Functionally, alcohol dehydrogenase that catalyzes the oxidation of a range of substrates, including linear and aromatic primary and secondary alcohols, as well as aldehydes, allowing bacterial growth with a variety of volatile organic compounds (VOCs) as carbon and energy sources. Uses a specific inducible cytochrome c550, encoded by the adjacent gene in the locus, as electron acceptor. This chain is Quinoprotein alcohol dehydrogenase PedE, found in Pseudomonas putida (strain ATCC 47054 / DSM 6125 / CFBP 8728 / NCIMB 11950 / KT2440).